Here is a 231-residue protein sequence, read N- to C-terminus: Platelet-activating factor acetylhydrolase IB subunit alpha1 (231 aa).

Ser2 carries the post-translational modification N-acetylserine. Ser2 bears the Phosphoserine mark. Residues Ser47, Asp192, and His195 contribute to the active site.

The protein belongs to the 'GDSL' lipolytic enzyme family. Platelet-activating factor acetylhydrolase IB beta/gamma subunits subfamily. Forms a catalytic dimer which is either homodimer (alpha1/alpha1 homodimer) or heterodimer with PAFAH1B2 (alpha1/alpha2 heterodimer). Component of the cytosolic (PAF-AH (I)) heterotetrameric enzyme, which is composed of PAFAH1B1 (beta), PAFAH1B2 (alpha2) and PAFAH1B3 (alpha1) subunits. The catalytic activity of the enzyme resides in the alpha1 (PAFAH1B3) and alpha2 (PAFAH1B2) subunits, whereas the beta subunit (PAFAH1B1) has regulatory activity. Trimer formation is not essential for the catalytic activity. Interacts with VLDLR; this interaction may modulate the Reelin pathway.

Its subcellular location is the cytoplasm. It catalyses the reaction a 1-O-alkyl-2-acetyl-sn-glycero-3-phosphocholine + H2O = a 1-O-alkyl-sn-glycero-3-phosphocholine + acetate + H(+). It carries out the reaction 1-O-hexadecyl-2-acetyl-sn-glycero-3-phosphocholine + H2O = 1-O-hexadecyl-sn-glycero-3-phosphocholine + acetate + H(+). The catalysed reaction is 1-O-hexadecyl-2-acetyl-sn-glycero-3-phosphate + H2O = 1-O-hexadecyl-sn-glycero-3-phosphate + acetate + H(+). With respect to regulation, beta subunit (PAFAH1B1) inhibits the acetylhydrolase activity of the alpha1/alpha1 catalytic homodimer. Functionally, alpha1 catalytic subunit of the cytosolic type I platelet-activating factor (PAF) acetylhydrolase (PAF-AH (I)) heterotetrameric enzyme that catalyzes the hydrolyze of the acetyl group at the sn-2 position of PAF and its analogs and modulates the action of PAF. The activity and substrate specificity of PAF-AH (I) are affected by its subunit composition. Both alpha1/alpha1 homodimer (PAFAH1B3/PAFAH1B3 homodimer) and alpha1/alpha2 heterodimer(PAFAH1B3/PAFAH1B2 heterodimer) hydrolyze 1-O-alkyl-2-acetyl-sn-glycero-3-phosphoric acid (AAGPA) more efficiently than PAF, but they have little hydrolytic activity towards 1-O-alkyl-2-acetyl-sn-glycero-3-phosphorylethanolamine (AAGPE). Plays an important role during the development of brain. The polypeptide is Platelet-activating factor acetylhydrolase IB subunit alpha1 (Pongo abelii (Sumatran orangutan)).